We begin with the raw amino-acid sequence, 342 residues long: Holliday junction branch migration complex subunit RuvB (342 aa).

The tract at residues 1–179 (MTNILSPEKS…FGIPMRLNFY (179 aa)) is large ATPase domain (RuvB-L). Residues isoleucine 18, arginine 19, glycine 60, lysine 63, threonine 64, threonine 65, 126–128 (EDF), arginine 169, tyrosine 179, and arginine 216 contribute to the ATP site. Mg(2+) is bound at residue threonine 64. Residues 180–250 (NTEELKKVLN…ISDFGLNRLE (71 aa)) are small ATPAse domain (RuvB-S). A head domain (RuvB-H) region spans residues 253 to 342 (CIGLDSNDYR…HQFNIFNENE (90 aa)). Residues arginine 289, arginine 308, and arginine 313 each contribute to the DNA site.

The protein belongs to the RuvB family. As to quaternary structure, homohexamer. Forms an RuvA(8)-RuvB(12)-Holliday junction (HJ) complex. HJ DNA is sandwiched between 2 RuvA tetramers; dsDNA enters through RuvA and exits via RuvB. An RuvB hexamer assembles on each DNA strand where it exits the tetramer. Each RuvB hexamer is contacted by two RuvA subunits (via domain III) on 2 adjacent RuvB subunits; this complex drives branch migration. In the full resolvosome a probable DNA-RuvA(4)-RuvB(12)-RuvC(2) complex forms which resolves the HJ.

Its subcellular location is the cytoplasm. It catalyses the reaction ATP + H2O = ADP + phosphate + H(+). In terms of biological role, the RuvA-RuvB-RuvC complex processes Holliday junction (HJ) DNA during genetic recombination and DNA repair, while the RuvA-RuvB complex plays an important role in the rescue of blocked DNA replication forks via replication fork reversal (RFR). RuvA specifically binds to HJ cruciform DNA, conferring on it an open structure. The RuvB hexamer acts as an ATP-dependent pump, pulling dsDNA into and through the RuvAB complex. RuvB forms 2 homohexamers on either side of HJ DNA bound by 1 or 2 RuvA tetramers; 4 subunits per hexamer contact DNA at a time. Coordinated motions by a converter formed by DNA-disengaged RuvB subunits stimulates ATP hydrolysis and nucleotide exchange. Immobilization of the converter enables RuvB to convert the ATP-contained energy into a lever motion, pulling 2 nucleotides of DNA out of the RuvA tetramer per ATP hydrolyzed, thus driving DNA branch migration. The RuvB motors rotate together with the DNA substrate, which together with the progressing nucleotide cycle form the mechanistic basis for DNA recombination by continuous HJ branch migration. Branch migration allows RuvC to scan DNA until it finds its consensus sequence, where it cleaves and resolves cruciform DNA. This is Holliday junction branch migration complex subunit RuvB from Rickettsia africae (strain ESF-5).